Reading from the N-terminus, the 637-residue chain is Coiled-coil domain-containing protein 22 homolog (637 aa).

Coiled-coil stretches lie at residues 322 to 489 (ETEI…YKQA) and 608 to 637 (SDRV…ETKN).

The protein belongs to the CCDC22 family.

This is Coiled-coil domain-containing protein 22 homolog from Dictyostelium discoideum (Social amoeba).